A 237-amino-acid polypeptide reads, in one-letter code: Placenta-expressed transcript 1 protein (237 aa).

The first 27 residues, 1–27 (MLSLRSLLPHLGLFLCLALHLSPSLSA), serve as a signal peptide directing secretion. 4 N-linked (GlcNAc...) asparagine glycosylation sites follow: asparagine 30, asparagine 67, asparagine 103, and asparagine 136. Residues 145–162 (KMEQVQPSASTPIPESSE) are compositionally biased toward polar residues. Residues 145 to 170 (KMEQVQPSASTPIPESSETSQTINTT) are disordered. Serine 218 carries the GPI-anchor amidated serine lipid modification. A propeptide spans 219 to 237 (PLAGALHILLVFLISKLLF) (removed in mature form).

N-glycosylated. In terms of processing, GPI-anchored. As to expression, present in hair follicle cells and sebaceous gland of skin, ciliated epithelial cells of trachea and bronchial tube, striated portion of submandibular gland, distal convoluted tubule cells of kidney, ciliated epithelial cells of oviduct, medulla of adrenal gland and anterior lobe of pituitary gland. Expressed in keratinocytes of the hair follicle at the trichilemmal zone corresponding to the terminally differentiated outermost suprabasal outer root sheath (ORS), including that of the sebaceous gland duct (SGD) and the directly adjacent upper distal end of the companion layer (CL). Expression is similar in all hair follicle growth stages. Also detected during both the early and late anagen phases above the bulge of stem cells. Expressed at the leading edge of the epidermal wound. Not expressed in the interfollicular epidermis (IFE), inner root sheath (IRS) and hair fiber. Highly expressed in placenta. Detected in mammary and prostate epithelia and in the pancreas (at protein level).

Its subcellular location is the apical cell membrane. Modulates leading keratinocyte migration and cellular adhesion to matrix proteins during a wound-healing response and promotes wound repair. May play a role during trichilemmal differentiation of the hair follicle. This chain is Placenta-expressed transcript 1 protein (Plet1), found in Mus musculus (Mouse).